Reading from the N-terminus, the 335-residue chain is NADH-quinone oxidoreductase subunit H (335 aa).

The next 8 membrane-spanning stretches (helical) occupy residues 11–31 (VIIS…AGAL), 81–101 (VIFT…FAVI), 114–134 (IGLL…LFAG), 154–174 (VSYE…VGSF), 187–207 (LWFI…GVAV), 238–258 (FFVG…TLFF), 270–290 (QLAF…FILL), and 309–329 (FCLP…LLNT).

Belongs to the complex I subunit 1 family. In terms of assembly, NDH-1 is composed of 13 different subunits. Subunits NuoA, H, J, K, L, M, N constitute the membrane sector of the complex.

The protein resides in the cell inner membrane. It carries out the reaction a quinone + NADH + 5 H(+)(in) = a quinol + NAD(+) + 4 H(+)(out). Its function is as follows. NDH-1 shuttles electrons from NADH, via FMN and iron-sulfur (Fe-S) centers, to quinones in the respiratory chain. The immediate electron acceptor for the enzyme in this species is believed to be ubiquinone. Couples the redox reaction to proton translocation (for every two electrons transferred, four hydrogen ions are translocated across the cytoplasmic membrane), and thus conserves the redox energy in a proton gradient. This subunit may bind ubiquinone. The protein is NADH-quinone oxidoreductase subunit H of Pseudomonas fluorescens (strain SBW25).